A 348-amino-acid chain; its full sequence is Putative transport protein HP_0567 (348 aa).

Helical transmembrane passes span 6-26, 27-47, 56-76, 143-163, 194-214, 224-244, 266-286, and 300-320; these read FFWI…QDFL, MDAL…VFLD, SFLC…FIVY, LKLI…FYYG, IVLL…GVMI, LGIL…LIWI, SILL…IVFI, and MLIF…GIIV.

This sequence belongs to the autoinducer-2 exporter (AI-2E) (TC 2.A.86) family.

The protein resides in the cell membrane. The chain is Putative transport protein HP_0567 from Helicobacter pylori (strain ATCC 700392 / 26695) (Campylobacter pylori).